The following is a 309-amino-acid chain: Olfactory receptor 10J5 (309 aa).

Topologically, residues 1-27 (MQRNNFTEVIEFVFLGFSSFGKHQITL) are extracellular. The chain crosses the membrane as a helical span at residues 28-48 (FVVFLTIYILTLAGNIIIVTI). Topologically, residues 49-57 (THIDHHLHT) are cytoplasmic. A helical membrane pass occupies residues 58-78 (PMYFFLSMLASSETVYTLVIV). At 79–84 (PRMLSS) the chain is on the extracellular side. Residues 85-105 (LIFYNLPISLAGCATQMFFFV) form a helical membrane-spanning segment. C97 and C178 are joined by a disulfide. Residues 106 to 131 (TLATNNCFLLTAMGYDRYVAICNPLR) are Cytoplasmic-facing. A helical membrane pass occupies residues 132–152 (YTIIMSKGMCALLVCGSLGTG). The Extracellular segment spans residues 153–203 (LVMAVLHVPAMFHLPFCGTVVEHFFCDIYPVMKLSCVDTTVNEIINYGVSS). The helical transmembrane segment at 204–224 (FVILVPIGLIFISYVLIVSSI) threads the bilayer. Residues 225–235 (LKIVSTEGQKK) are Cytoplasmic-facing. Residues 236-256 (AFATCASHLTVVIVHYGCASI) form a helical membrane-spanning segment. The Extracellular portion of the chain corresponds to 257–270 (AYLKPKSESSVEKD). The helical transmembrane segment at 271-291 (LLLSVTYTIITPLLNPVVYSL) threads the bilayer. The Cytoplasmic portion of the chain corresponds to 292-309 (RNKEVKDALCRAVGRNTS).

It belongs to the G-protein coupled receptor 1 family. As to expression, expressed in the olfactory epithelium as well as in the testis. Expressed in round spermatids during stages VI-VIII of spermatogenesis.

The protein localises to the cell membrane. In terms of biological role, olfactory receptor. Activated by the synthetic floral odorant, lyral, and by alpha-cedrene, a sesquiterpene constituent of cedarwood oil. Its activation increases intracellular Ca(2+). Acts as a key regulator of myogenesis through its actions on cell migration and adhesion by activating the Ca(2+)-dependent AKT signal transduction pathway. Also acts as a regulator of angiogenesis. Moreover, plays a role in the regulation of lipid accumulation in hepatocytes via the cAMP-PKA pathway. Involved in sperm chemotaxis and motility. In Mus musculus (Mouse), this protein is Olfactory receptor 10J5.